Here is a 427-residue protein sequence, read N- to C-terminus: Trigger factor (427 aa).

The 86-residue stretch at 163-248 folds into the PPIase FKBP-type domain; it reads GDTVVIDFVG…VNEVKAKELP (86 aa).

The protein belongs to the FKBP-type PPIase family. Tig subfamily.

It is found in the cytoplasm. The catalysed reaction is [protein]-peptidylproline (omega=180) = [protein]-peptidylproline (omega=0). In terms of biological role, involved in protein export. Acts as a chaperone by maintaining the newly synthesized protein in an open conformation. Functions as a peptidyl-prolyl cis-trans isomerase. In Lactococcus lactis subsp. cremoris (strain MG1363), this protein is Trigger factor.